The chain runs to 176 residues: MRITISGPPGSGTTSLSKHLAAEHNLKLISAGEVFRQLAREKGMDLAAFGELAENDPSIDLMIDARQKQIATEQDDIIVEGRLSGRMVEQADLRIWLNAPLTCRVGRIAFRDSVTCEEEAMTLTREREASEAKRYMMYYQIDISDLSSYHLVLNTERWSVGQLGLIVNCAIAAVRD.

Residue 7-15 (GPPGSGTTS) participates in ATP binding.

The protein belongs to the cytidylate kinase family. Type 2 subfamily.

The protein localises to the cytoplasm. It carries out the reaction CMP + ATP = CDP + ADP. The enzyme catalyses dCMP + ATP = dCDP + ADP. This chain is Cytidylate kinase, found in Methanosphaerula palustris (strain ATCC BAA-1556 / DSM 19958 / E1-9c).